A 283-amino-acid polypeptide reads, in one-letter code: Large ribosomal subunit protein uL2 (283 aa).

Disordered regions lie at residues 34–53 and 224–283; these read TEPY…TARH and AMNP…KKKK. Over residues 232–245 the composition is skewed to gly residues; it reads NGGGQGKSKGGGGW. Basic residues predominate over residues 256–268; the sequence is AKGKKTRHKRKNS.

This sequence belongs to the universal ribosomal protein uL2 family. In terms of assembly, part of the 50S ribosomal subunit. Forms a bridge to the 30S subunit in the 70S ribosome.

One of the primary rRNA binding proteins. Required for association of the 30S and 50S subunits to form the 70S ribosome, for tRNA binding and peptide bond formation. It has been suggested to have peptidyltransferase activity; this is somewhat controversial. Makes several contacts with the 16S rRNA in the 70S ribosome. This chain is Large ribosomal subunit protein uL2, found in Methylacidiphilum infernorum (isolate V4) (Methylokorus infernorum (strain V4)).